Here is a 343-residue protein sequence, read N- to C-terminus: Cilia- and flagella-associated protein 36 (343 aa).

A phosphoserine mark is found at Ser-85 and Ser-147. Positions 147–181 form a coiled coil; it reads SDLEQEEMKILREVLRKSKEEYDQEEERKRKKQSS. The disordered stretch occupies residues 165–191; that stretch reads KEEYDQEEERKRKKQSSEGKMEEPPIY. Phosphoserine is present on Ser-201. The segment at 286–323 is disordered; sequence SMRKDMRAKQIQNTEQKGKPTREAEEMTEKPEMTAEEK. The span at 301–323 shows a compositional bias: basic and acidic residues; that stretch reads QKGKPTREAEEMTEKPEMTAEEK.

Belongs to the CFAP36 family. In terms of assembly, interacts with ARL3. Widely expressed (at protein level).

The protein localises to the nucleus. The protein resides in the cytoplasm. Its subcellular location is the cell projection. It localises to the cilium. It is found in the flagellum. Functionally, may act as an effector for ARL3. The chain is Cilia- and flagella-associated protein 36 from Rattus norvegicus (Rat).